The primary structure comprises 503 residues: MDLIPSFSTETWLLLAISLVLLYLYGTYTHGIFRKLGIPGPTPLPFVGTALGYRNGFYVFDMKCFSKYGRMWGFYDGRQPVLAITDPDMIKTVLVKECYSVFTNRRTLGPVGFMKSAISLSEDEEWKRMRTLLSPTFTTGKLKEMFPIIGQYGDVLVNNLRKEAEKGKAINLKDVFGAYSMDVITSTSFGVNIDSLNHPQDPFVENTKKLLKFDFLDPFFFSILLFPFLTPVFEILNIWLFPKKVTDFFRKSVERMKESRLKDKQKHRVDFLQLMINSQNSKEMDTHKALSDLELVAQSIIFIFAGYETTSTSLSFLMYELATHPDVQQKLQEEIDATFPNKALPTYDALVQMEYLDMVLNETLRLYPIAGRLERVCKKDVEISGVFIPKGTVVMVPTFTLHRDQSLWPEPEEFRPERFSRKNKDSINPYTYLPFGTGPRNCIGMRFAIMNMKLALVRVLQNFSFKPCKETQIPLKLNAQGIIQPEKPIVLKVEPRDGSVNGA.

C442 contacts heme.

It belongs to the cytochrome P450 family. Heme is required as a cofactor.

It localises to the endoplasmic reticulum membrane. Its subcellular location is the microsome membrane. It catalyses the reaction an organic molecule + reduced [NADPH--hemoprotein reductase] + O2 = an alcohol + oxidized [NADPH--hemoprotein reductase] + H2O + H(+). Its function is as follows. Cytochromes P450 are a group of heme-thiolate monooxygenases. In liver microsomes, this enzyme is involved in an NADPH-dependent electron transport pathway. It oxidizes a variety of structurally unrelated compounds, including steroids, fatty acids, and xenobiotics. The chain is Cytochrome P450 3A12 (CYP3A12) from Canis lupus familiaris (Dog).